Here is a 442-residue protein sequence, read N- to C-terminus: Adenylosuccinate synthetase (442 aa).

GTP contacts are provided by residues 25–31, 53–55, and K62; these read GDEGKGK and GHT. The active-site Proton acceptor is the D26. Mg(2+) contacts are provided by D26 and G53. IMP contacts are provided by residues 26–29 and 51–54; these read DEGK and NAGH. Residue H54 is the Proton donor of the active site. Residues T141, R155, N232, and T247 each coordinate IMP. A GTP-binding site is contributed by T307. Substrate is bound at residue 307–313; it reads TTTKRPR. R311 contributes to the IMP binding site. GTP-binding positions include R313, 339 to 341, and 425 to 427; these read KLD and GVG.

This sequence belongs to the adenylosuccinate synthetase family. As to quaternary structure, homodimer. The cofactor is Mg(2+).

The protein resides in the cytoplasm. The catalysed reaction is IMP + L-aspartate + GTP = N(6)-(1,2-dicarboxyethyl)-AMP + GDP + phosphate + 2 H(+). Its pathway is purine metabolism; AMP biosynthesis via de novo pathway; AMP from IMP: step 1/2. Inhibited by hadacidin. Activated by fructose 1,6-bisphosphate. In terms of biological role, plays an important role in the salvage pathway for purine nucleotide biosynthesis. Catalyzes the first committed step in the biosynthesis of AMP from IMP. This Plasmodium falciparum protein is Adenylosuccinate synthetase (Adss).